The following is a 175-amino-acid chain: Bifunctional protein PyrR (175 aa).

The short motif at 98–110 (VIIIDDVLYTGRT) is the PRPP-binding element.

This sequence belongs to the purine/pyrimidine phosphoribosyltransferase family. PyrR subfamily. Homodimer and homohexamer; in equilibrium.

It carries out the reaction UMP + diphosphate = 5-phospho-alpha-D-ribose 1-diphosphate + uracil. In terms of biological role, regulates transcriptional attenuation of the pyrimidine nucleotide (pyr) operon by binding in a uridine-dependent manner to specific sites on pyr mRNA. This disrupts an antiterminator hairpin in the RNA and favors formation of a downstream transcription terminator, leading to a reduced expression of downstream genes. Its function is as follows. Also displays a weak uracil phosphoribosyltransferase activity which is not physiologically significant. The polypeptide is Bifunctional protein PyrR (Staphylococcus aureus (strain bovine RF122 / ET3-1)).